The following is a 718-amino-acid chain: Methionine--tRNA ligase (718 aa).

A 'HIGH' region motif is present at residues 27–37 (PYANGQIHIGH). Zn(2+) is bound by residues cysteine 158, cysteine 161, cysteine 171, and cysteine 174. A 'KMSKS' region motif is present at residues 348–352 (KMSKS). Lysine 351 contacts ATP. The region spanning 612–718 (DFAKIDLRIA…SGAKPGMRVK (107 aa)) is the tRNA-binding domain.

The protein belongs to the class-I aminoacyl-tRNA synthetase family. MetG type 1 subfamily. Homodimer. Zn(2+) is required as a cofactor.

It is found in the cytoplasm. The enzyme catalyses tRNA(Met) + L-methionine + ATP = L-methionyl-tRNA(Met) + AMP + diphosphate. Its function is as follows. Is required not only for elongation of protein synthesis but also for the initiation of all mRNA translation through initiator tRNA(fMet) aminoacylation. In Burkholderia thailandensis (strain ATCC 700388 / DSM 13276 / CCUG 48851 / CIP 106301 / E264), this protein is Methionine--tRNA ligase.